The sequence spans 240 residues: L-isoleucine-4-hydroxylase (240 aa).

Residues His-159, Asp-161, and His-212 each contribute to the Fe cation site.

The protein belongs to the iron/ascorbate-dependent oxidoreductase family. L-ascorbate is required as a cofactor. It depends on Fe(2+) as a cofactor.

The enzyme catalyses L-isoleucine + 2-oxoglutarate + O2 = (4S)-4-hydroxy-L-isoleucine + succinate + CO2. Functionally, catalyzes the hydroxylation of L-isoleucine to produce (4S)-4-hydroxy-L-isoleucine. Can also catalyze the hydroxylation of L-leucine, L-norvaline, L-norleucine and L-allo-isoleucine, as well as the sulfoxidation of L-methionine, L-ethionine, S-methyl-L-cysteine, S-ethyl-L-cysteine, and S-allyl-L-cysteine. This Bacillus thuringiensis protein is L-isoleucine-4-hydroxylase.